A 24-amino-acid chain; its full sequence is Alpha-lactalbumin (24 aa).

The protein belongs to the glycosyl hydrolase 22 family. Lactose synthase (LS) is a heterodimer of a catalytic component, beta1,4-galactosyltransferase (beta4Gal-T1) and a regulatory component, alpha-lactalbumin (LA). In terms of processing, glycosylated (50% of the proteins). As to expression, mammary gland specific. Secreted in milk.

The protein resides in the secreted. Its function is as follows. Regulatory subunit of lactose synthase, changes the substrate specificity of galactosyltransferase in the mammary gland making glucose a good acceptor substrate for this enzyme. This enables LS to synthesize lactose, the major carbohydrate component of milk. In other tissues, galactosyltransferase transfers galactose onto the N-acetylglucosamine of the oligosaccharide chains in glycoproteins. This is Alpha-lactalbumin (LALBA) from Felis catus (Cat).